Consider the following 216-residue polypeptide: Adenylate kinase (216 aa).

10 to 15 provides a ligand contact to ATP; the sequence is GAGKGT. Positions 30 to 59 are NMP; sequence STGDMFRAAMKAETELGLQAKSFIDKGALV. AMP contacts are provided by residues Thr31, Arg36, 57 to 59, 85 to 88, and Gln92; these read ALV and GFPR. Residues 126-163 form an LID region; sequence GRRICKECGATYHLEFNPPAKADVCDKCGGELYQRSDD. Arg127 lines the ATP pocket. Zn(2+) contacts are provided by Cys130 and Cys133. An ATP-binding site is contributed by 136–137; the sequence is TY. Zn(2+) contacts are provided by Cys150 and Cys153. Arg160 and Arg171 together coordinate AMP. Gln199 contributes to the ATP binding site.

The protein belongs to the adenylate kinase family. In terms of assembly, monomer.

The protein localises to the cytoplasm. The catalysed reaction is AMP + ATP = 2 ADP. The protein operates within purine metabolism; AMP biosynthesis via salvage pathway; AMP from ADP: step 1/1. Catalyzes the reversible transfer of the terminal phosphate group between ATP and AMP. Plays an important role in cellular energy homeostasis and in adenine nucleotide metabolism. This is Adenylate kinase from Bacillus cytotoxicus (strain DSM 22905 / CIP 110041 / 391-98 / NVH 391-98).